The chain runs to 652 residues: Bifunctional protein ThiO/ThiG (652 aa).

A thiO region spans residues 1–366; that stretch reads MTRDIVIIGG…HYSRFQKQAS (366 aa). Residues 5-19 and 44-46 each bind FAD; these read IVII…AIAV and AGM. Position 52 (Glu52) interacts with glycine. Val173 contributes to the FAD binding site. Positions 301 and 327 each coordinate glycine. 325-331 provides a ligand contact to FAD; the sequence is HYRNGIL. Residues 393 to 652 are thiG; that stretch reads SLIIAGKSFH…ASSPVTGTIS (260 aa). Residue Lys494 is the Schiff-base intermediate with DXP of the active site. Residues Gly555, 581–582, and 603–604 contribute to the 1-deoxy-D-xylulose 5-phosphate site; these read AG and NS.

In the N-terminal section; belongs to the DAO family. ThiO subfamily. The protein in the C-terminal section; belongs to the ThiG family. In terms of assembly, interacts with ThiH and ThiS. FAD serves as cofactor.

Its subcellular location is the cytoplasm. The enzyme catalyses glycine + O2 + H2O = glyoxylate + H2O2 + NH4(+). It catalyses the reaction [ThiS sulfur-carrier protein]-C-terminal-Gly-aminoethanethioate + 2-iminoacetate + 1-deoxy-D-xylulose 5-phosphate = [ThiS sulfur-carrier protein]-C-terminal Gly-Gly + 2-[(2R,5Z)-2-carboxy-4-methylthiazol-5(2H)-ylidene]ethyl phosphate + 2 H2O + H(+). It functions in the pathway cofactor biosynthesis; thiamine diphosphate biosynthesis. Its function is as follows. Catalyzes the FAD-dependent oxidative deamination of glycine. Is essential for thiamine biosynthesis since the oxidation of glycine catalyzed by ThiO generates the glycine imine intermediate (dehydroglycine) required for the biosynthesis of the thiazole ring of thiamine pyrophosphate. In terms of biological role, catalyzes the rearrangement of 1-deoxy-D-xylulose 5-phosphate (DXP) to produce the thiazole phosphate moiety of thiamine. Sulfur is provided by the thiocarboxylate moiety of the carrier protein ThiS. In vitro, sulfur can be provided by H(2)S. The chain is Bifunctional protein ThiO/ThiG (thiO/thiG) from Trichormus variabilis (strain ATCC 29413 / PCC 7937) (Anabaena variabilis).